Reading from the N-terminus, the 538-residue chain is Diacylglycerol O-acyltransferase 1-1 (538 aa).

Disordered regions lie at residues M1–V39 and A54–R106. Over residues E69–P83 the composition is skewed to low complexity. The next 7 helical transmembrane spans lie at A136 to V156, W186 to E206, V218 to I238, V245 to F265, N293 to Y313, G326 to I346, and L382 to L402. An FYXDWWN motif motif is present at residues F409 to N415. Transmembrane regions (helical) follow at residues V451 to P471, I474 to A494, and V505 to L525. H464 is an active-site residue.

It belongs to the membrane-bound acyltransferase family. Sterol o-acyltransferase subfamily.

It is found in the endoplasmic reticulum membrane. It catalyses the reaction an acyl-CoA + a 1,2-diacyl-sn-glycerol = a triacyl-sn-glycerol + CoA. Its pathway is glycerolipid metabolism; triacylglycerol biosynthesis. Involved in triacylglycerol (TAG) synthesis. Catalyzes the acylation of the sn-3 hydroxy group of sn-1,2-diacylglycerol using acyl-CoA. The polypeptide is Diacylglycerol O-acyltransferase 1-1 (Oryza sativa subsp. japonica (Rice)).